We begin with the raw amino-acid sequence, 712 residues long: Elongation factor G (712 aa).

The 283-residue stretch at 8-290 (TRYRNIGISA…AVIEFLPSPT (283 aa)) folds into the tr-type G domain. GTP contacts are provided by residues 17 to 24 (AHIDAGKT), 88 to 92 (DTPGH), and 142 to 145 (NKMD).

It belongs to the TRAFAC class translation factor GTPase superfamily. Classic translation factor GTPase family. EF-G/EF-2 subfamily.

It is found in the cytoplasm. Catalyzes the GTP-dependent ribosomal translocation step during translation elongation. During this step, the ribosome changes from the pre-translocational (PRE) to the post-translocational (POST) state as the newly formed A-site-bound peptidyl-tRNA and P-site-bound deacylated tRNA move to the P and E sites, respectively. Catalyzes the coordinated movement of the two tRNA molecules, the mRNA and conformational changes in the ribosome. In Acinetobacter baumannii (strain AB307-0294), this protein is Elongation factor G.